Consider the following 1251-residue polypeptide: Probable transcription factor TDA9 (1251 aa).

2 consecutive C2H2-type zinc fingers follow at residues 61 to 83 and 89 to 112; these read FLCH…QRAH and FLCV…HKLH. 2 disordered regions span residues 160–227 and 398–428; these read VQLK…KSKR and NHSH…IEKS. Residues 164–173 are compositionally biased toward basic residues; sequence KAAKEKKNGK. Residues 183–202 show a composition bias toward polar residues; sequence YGANNHSTDVSPSVGNSSTP. The segment covering 407-428 has biased composition (low complexity); that stretch reads NNSSSGINYSNNKNNNESIEKS. Phosphoserine is present on residues Ser-527 and Ser-603. A compositionally biased stretch (low complexity) spans 617–634; that stretch reads SLTPSLTTQTATTQSGPG. The tract at residues 617 to 636 is disordered; that stretch reads SLTPSLTTQTATTQSGPGWT.

The protein belongs to the RSF2/TDA9 family.

It localises to the nucleus. In terms of biological role, DNA-binding protein that acts probably as a transcription factor. The polypeptide is Probable transcription factor TDA9 (TDA9) (Saccharomyces cerevisiae (strain ATCC 204508 / S288c) (Baker's yeast)).